The following is a 264-amino-acid chain: Occludin/ELL domain-containing protein 1 (264 aa).

The segment covering 1–10 (MHNPDGSASP) has biased composition (polar residues). Positions 1-112 (MHNPDGSASP…QPGPHKAKTK (112 aa)) are disordered. A compositionally biased stretch (pro residues) spans 96–105 (PRPPCQPQPG). Residues 147–257 (PDYELKYPPV…QIQKFDDQGD (111 aa)) enclose the OCEL domain.

This sequence belongs to the ELL/occludin family.

This Homo sapiens (Human) protein is Occludin/ELL domain-containing protein 1 (OCEL1).